The chain runs to 545 residues: Phenylalanine--tRNA ligase beta subunit (545 aa).

The B5 domain occupies 268-343; it reads FLHKIQNVRE…MSIGYNNLEP (76 aa). D321, D327, E330, and D331 together coordinate Mg(2+).

Belongs to the phenylalanyl-tRNA synthetase beta subunit family. Type 2 subfamily. As to quaternary structure, tetramer of two alpha and two beta subunits. It depends on Mg(2+) as a cofactor.

Its subcellular location is the cytoplasm. The enzyme catalyses tRNA(Phe) + L-phenylalanine + ATP = L-phenylalanyl-tRNA(Phe) + AMP + diphosphate + H(+). In Saccharolobus islandicus (strain M.14.25 / Kamchatka #1) (Sulfolobus islandicus), this protein is Phenylalanine--tRNA ligase beta subunit.